The chain runs to 621 residues: Ubiquitin-like-specific protease 1 (621 aa).

Ser-2 carries the post-translational modification N-acetylserine. 2 positions are modified to phosphoserine: Ser-21 and Ser-25. 2 disordered regions span residues 116 to 150 (FDGS…ENYS) and 169 to 196 (RRRI…SNCD). Over residues 124 to 141 (SGNSDVESRSSGSRSSDV) the composition is skewed to low complexity. Residue Thr-179 is modified to Phosphothreonine. The span at 179–196 (TPSTSPISSLASQKSNCD) shows a compositional bias: polar residues. Ser-264 is subject to Phosphoserine. The tract at residues 432–621 (NIEITVRDFK…AHLILTDALK (190 aa)) is protease. Catalysis depends on residues His-514, Asp-531, and Cys-580.

Belongs to the peptidase C48 family.

The enzyme catalyses Hydrolysis of the alpha-linked peptide bond in the sequence Gly-Gly-|-Ala-Thr-Tyr at the C-terminal end of the small ubiquitin-like modifier (SUMO) propeptide, Smt3, leading to the mature form of the protein. A second reaction involves the cleavage of an epsilon-linked peptide bond between the C-terminal glycine of the mature SUMO and the lysine epsilon-amino group of the target protein.. Functionally, protease that catalyzes two essential functions in the SUMO pathway: processing of full-length SMT3 to its mature form and deconjugation of SMT3 from targeted proteins. Has an essential role in the G2/M phase of the cell cycle. The protein is Ubiquitin-like-specific protease 1 (ULP1) of Saccharomyces cerevisiae (strain ATCC 204508 / S288c) (Baker's yeast).